The following is a 148-amino-acid chain: Secretory phospholipase A2 (148 aa).

An N-terminal signal peptide occupies residues 1-23; the sequence is MKLSVLLALGASSLAAAAPAATA. Asn-61 is a glycosylation site (N-linked (GlcNAc...) asparagine). Cysteines 62 and 78 form a disulfide. Residue His-81 is part of the active site. Asp-82 lines the Ca(2+) pocket.

Belongs to the phospholipase A2 family. It depends on Ca(2+) as a cofactor.

The protein localises to the secreted. It carries out the reaction a 1,2-diacyl-sn-glycero-3-phosphocholine + H2O = a 1-acyl-sn-glycero-3-phosphocholine + a fatty acid + H(+). Secretory phospholipase that catalyzes the calcium-dependent hydrolysis of the 2-acyl groups in 3-sn-phosphoglycerides. Increases the ability to utilize host-derived nutrients and lipids, and promotes lipid dropplets accumulation. Plays a role in virulence. The polypeptide is Secretory phospholipase A2 (Arthroderma benhamiae (strain ATCC MYA-4681 / CBS 112371) (Trichophyton mentagrophytes)).